The primary structure comprises 343 residues: Apolipoprotein L6 (343 aa).

Residues 1–10 are compositionally biased toward basic and acidic residues; sequence MDNQAERESE. Residues 1–24 form a disordered region; the sequence is MDNQAERESEAGVGLQRDEDDAPL.

It belongs to the apolipoprotein L family. In terms of tissue distribution, widely expressed; highly expressed in the uterus, fetal brain and spinal cord, also detected in heart, liver, lung, colon, spleen, thymus, prostate, placenta, adrenal gland, salivary and mammary gland.

The protein localises to the cytoplasm. Functionally, may affect the movement of lipids in the cytoplasm or allow the binding of lipids to organelles. In Homo sapiens (Human), this protein is Apolipoprotein L6 (APOL6).